The primary structure comprises 243 residues: Pleckstrin homology domain-containing family B member 1 (243 aa).

In terms of domain architecture, PH spans 21–128; it reads ALVRGGWLWR…WKTALLEANS (108 aa).

Homodimer. Interacts (via PH domain) with MYO1C. Interacts (via PH domain) with MYO7A. Binds transducins. In terms of tissue distribution, highly expressed in retina and brain. Levels are very low or not detectable in all other tissues tested.

It is found in the membrane. The protein resides in the cytoplasm. This chain is Pleckstrin homology domain-containing family B member 1 (PLEKHB1), found in Homo sapiens (Human).